The primary structure comprises 133 residues: Small ribosomal subunit protein uS9 (133 aa).

Residues 102–133 (KPKGLLTRDPREVERKKYGLKKARRAPQFSKR) form a disordered region. Residues 107–118 (LTRDPREVERKK) are compositionally biased toward basic and acidic residues. A compositionally biased stretch (basic residues) spans 119-133 (YGLKKARRAPQFSKR).

It belongs to the universal ribosomal protein uS9 family.

This Deinococcus deserti (strain DSM 17065 / CIP 109153 / LMG 22923 / VCD115) protein is Small ribosomal subunit protein uS9.